Consider the following 180-residue polypeptide: Urease accessory protein UreE (180 aa).

The tract at residues 71–90 (AAPSGAGHGDGEQDGTGAPG) is disordered.

The protein belongs to the UreE family.

The protein localises to the cytoplasm. In terms of biological role, involved in urease metallocenter assembly. Binds nickel. Probably functions as a nickel donor during metallocenter assembly. The protein is Urease accessory protein UreE of Kocuria rhizophila (strain ATCC 9341 / DSM 348 / NBRC 103217 / DC2201).